The following is a 552-amino-acid chain: HTH-type transcriptional regulator SgrR (552 aa).

Positions 163–493 (ELKPDLAHHW…DDLDTDAQQW (331 aa)) are solute-binding.

In terms of biological role, activates the small RNA gene sgrS under glucose-phosphate stress conditions as well as yfdZ. Represses its own transcription under both stress and non-stress conditions. Might act as a sensor of the intracellular accumulation of phosphoglucose by binding these molecules in its C-terminal solute-binding domain. This Pectobacterium atrosepticum (strain SCRI 1043 / ATCC BAA-672) (Erwinia carotovora subsp. atroseptica) protein is HTH-type transcriptional regulator SgrR.